The sequence spans 475 residues: MHFETVIGLEVHVELKTESKMFSASPAHFGAEPNTNVNVVDLGYPGVLPVVNKTAVDWAMRAAMALNMDIRTETKFDRKNYFYPDNPKAYQISQFDEPIGENGYIDIEVNGETKRIGITRLHMEEDAGKLTHKDGYSLVDLNRQGTPLVEIVSEPDIRTPEEAYAYLEKLKAIIQYTGVSDVRMEEGSLRCDANISLRPVGQEKFGTKAELKNLNSFSFVKKGLEHEVKRQEEVLLNGGEILQETRRFDESTGKTILMRVKEGSDDYRYFPEPDLVPLYIDEAWKERVRASIPELPDVRKAKYVSEYGLPEYDAHVLTLTKEMSDFFEAMIALDADAKLSSNWLMGGVNEYLNKNQKELHETALTPENLSEMVKLLADGTISSKIAKKVFADTVETGKAPKVIMEEQGLVQISDPEQLKAFVTEALDNNPQSIEDFKNGKGKATGFLVGQIMKISKGQANPQLVNKILREELEKR.

Belongs to the GatB/GatE family. GatB subfamily. As to quaternary structure, heterotrimer of A, B and C subunits.

It carries out the reaction L-glutamyl-tRNA(Gln) + L-glutamine + ATP + H2O = L-glutaminyl-tRNA(Gln) + L-glutamate + ADP + phosphate + H(+). The catalysed reaction is L-aspartyl-tRNA(Asn) + L-glutamine + ATP + H2O = L-asparaginyl-tRNA(Asn) + L-glutamate + ADP + phosphate + 2 H(+). Allows the formation of correctly charged Asn-tRNA(Asn) or Gln-tRNA(Gln) through the transamidation of misacylated Asp-tRNA(Asn) or Glu-tRNA(Gln) in organisms which lack either or both of asparaginyl-tRNA or glutaminyl-tRNA synthetases. The reaction takes place in the presence of glutamine and ATP through an activated phospho-Asp-tRNA(Asn) or phospho-Glu-tRNA(Gln). This Macrococcus caseolyticus (strain JCSC5402) (Macrococcoides caseolyticum) protein is Aspartyl/glutamyl-tRNA(Asn/Gln) amidotransferase subunit B.